The primary structure comprises 284 residues: NADH-cytochrome b5 reductase 1 (284 aa).

Residues 7 to 27 form a helical membrane-spanning segment; sequence KLVVVIVIVVVPLLFKFIIGP. An FAD-binding FR-type domain is found at 38–142; it reads NDFQSFPLVE…KGPRGNYHYE (105 aa). 148–180 is an FAD binding site; sequence HLGMIAGGTGIAPMYQIMKAIAMDSHDTTKVSL.

Belongs to the flavoprotein pyridine nucleotide cytochrome reductase family. Monomer. Component of the 2-(3-amino-3-carboxypropyl)histidine synthase complex composed of DPH1, DPH2, KTI11/DPH3 and a NADH-dependent reductase, predominantly CBR1. Interacts with KTI11/DPH3. Interacts with STE20. The cofactor is FAD.

It is found in the mitochondrion outer membrane. The catalysed reaction is 2 Fe(III)-[cytochrome b5] + NADH = 2 Fe(II)-[cytochrome b5] + NAD(+) + H(+). It catalyses the reaction 2 Fe(3+)-[Dph3] + NADH = 2 Fe(2+)-[Dph3] + NAD(+) + H(+). Its pathway is protein modification; peptidyl-diphthamide biosynthesis. With respect to regulation, competitively inhibited by NAD(+). Inhibited by mercurials such as p-chloromercuribenzoate (PCMB) and HgCl(2). Enzymatic activity increases under anaerobic conditions. In terms of biological role, NADH-dependent reductase for KTI11/DPH3 and cytochrome b5. Required for the first step of diphthamide biosynthesis, a post-translational modification of histidine which occurs in elongation factor 2. DPH1 and DPH2 transfer a 3-amino-3-carboxypropyl (ACP) group from S-adenosyl-L-methionine (SAM) to a histidine residue, the reaction is assisted by a reduction system comprising KTI11/DPH3 and a NADH-dependent reductase, predominantly CBR1. By reducing KTI11/DPH3, also involved in the formation of the tRNA wobble base modification mcm5s 2U (5-methoxycarbonylmethyl-2-thiouridine), mediated by the elongator complex. The cytochrome b5/NADH cytochrome b5 reductase electron transfer system supports the catalytic activity of several sterol biosynthetic enzymes. Plays a role in bud morphology. This Saccharomyces cerevisiae (strain YJM789) (Baker's yeast) protein is NADH-cytochrome b5 reductase 1 (CBR1).